The primary structure comprises 1925 residues: MARRAAGGAPPSARAAAAVPLRPRPHSRGPGLLPLPLLLLLGAARAGALEIQRRFPSPTPTNNFALDGTAGTVYLAAVNRLYQLSSANLSLEAEATVGPVPDSPLCHAPQLPQASCEHPRRLTDNYNKILQLDPGQGLVVACGSIYQGLCQLRRRGNISALAVSFPPAAPTAEPVTVFPSMLNVAANHPNASTVGLVLPPTSGTGGSRLLVGATYTGFGSAFFPRNRSLEDHRFENTPEIAIRSLDARGDLAKLFTFDLNPSDDNILKIKQGAKEQHKLGFVRAFLHPAVPPHSAQPYAYLALNSEARAGDKDSQARSLLARICLPRGAGGDAKKLTESYIQLGLQCAGGAGRGDLYSRLVSVFPAREQFFAVFERPQGAPGARNAPAALCAFRFDDVQAAIRAARTACFVEPAPDVVAVLDSVVQGTGPACESKRNIQLQPEQLDCGAAHLQHPLTILQPLRASPVFRAPGLTAVAVASANNYTAVFLGTATGRLLKISLNESMQVVSRRVLTVAYGEPVHHVMQFDPMDPGYLYLMTSHQMARVKVAACEVHSTCGDCVGAADAYCGWCTLETRCTLQQDCTNSSQPHFWTSASEGPSRCPAMTVLPSEIDVHRDYTGMILQISGSLPSLSGMEMACDYGNGVRTVARVPGPAYDHQIAYCNLLPRAQFPSFPAGQDHVTVEMSVRVKGHNIVSANFTIYDCSRIGQVYPHTACTSCLSTQWPCSWCIQLHSCVSNQSQCQDSPNPTSPQDCPQILPSPLAPVPTGGSQDILVPLTKATFFHGSSLECSFGLEESFEAVWANNSLVRCNQVVLHTTQKSQVFPLSLKLKGPPDRFLDSPNPMTVVVYNCAMGSPDCSQCLGREDLGHLCVWNDGCRLRGPLQPLPGTCPAPEIRAIEPLSGPLDGGTLLTIRGRNLGRRLSDVAHGVWIGSVACEPLADRYTVSEEIVCATGPAAGAFSDVVTVNVSKEGRSREQFSYVLPTVHSLEPSMGPKAGGTRITIHGSDLNVGSMLQVLVNDTDPCTDLTRTATSITCTVPGGTLPSPVPVCVRFESRGCVHGNLTFWYMQNPVITAISPGRSPVSGGRTITVAGERFHMVQNVSMAVHHIGREPTFCKVLNSTLITCPSPGALSNASAPVDFFINGRAYADEAAEELLDPAEAQRGSRFRLDYLPNPQFSTAKREKWIKHHPGEPLTLVIHKEQDSLGLESHEYHIKIGQVSCDIQIISDRVIHCSVNESLGTAEGQLPITIQVGNFNQTIATLQLGGSETAIVVSIVICSVLLLLSVVALFVFCTKSRRAERYWQKTLLQMEEMESQIREEIRKGFAELQTDMTDLTKELNRSQGIPFLEYKHFVTRTFFPKCSSLYEERYVLPSKTLNSQGGSPPQETHPLLGEWNIPEHCRPSMEEGISLFSSLLNNKHFLIVFVHALEQQKDFAVRDRCSLASLLTIALHGKLEYYTSIMKELLVDLIDASAAKNPKLMLRRTESVVEKMLTNWMSICMYGCLRETVGEPFFLLLCAIKQQINKGSIDAITGKARYTLNEEWLLRENIEAKPRNLNVSFQGCGMDSLSVRAMDTDTLTQVKEKILEAFCKNVPYSQWPRAEDVDLEWFASSTQSYVLRDLDDTSVVEDGRKKLNTLAHYKIPEGASLAMSLTDKKDSTLGRVKDLDTEKYFHLVLPTDELVEPKKSHRQSHRKKVLPEIYLTRLLSTKGTLQKFLDDLFKAILSIREDKPPLAVKYFFDFLEEQAEKRGISDPDTLHIWKTNSLPLRFWVNILKNPQFVFDIEKTDHIDACLSVIAQAFIDACSISDLQLGKDSPTNKLLYAKEIPEYRKTVQRYYKQIQDMTPLSEQEMNAHLAEESRKYQNEFNTNVAMAEIYKYAKRYRPQIMAALEANPTARRTQLQHKFEQVVALMENNIYECYSEA.

A compositionally biased stretch (low complexity) spans M1–L21. The tract at residues M1–H26 is disordered. The signal sequence occupies residues M1–A48. In terms of domain architecture, Sema spans L49–V548. Over L49–A1271 the chain is Extracellular. 2 disulfides stabilise this stretch: C106–C116 and C142–C150. N157 and N226 each carry an N-linked (GlcNAc...) asparagine glycan. 2 disulfides stabilise this stretch: C324–C447 and C347–C391. N483 carries N-linked (GlcNAc...) asparagine glycosylation. Disulfide bonds link C551–C568, C557–C602, C560–C577, C571–C583, and C639–C663. IPT/TIG domains follow at residues P893 to Q977, P983 to F1065, and P1071 to G1145. N967 is a glycosylation site (N-linked (GlcNAc...) asparagine). An N-linked (GlcNAc...) asparagine glycan is attached at N1120. The chain crosses the membrane as a helical span at residues I1272–V1292. The Cytoplasmic portion of the chain corresponds to F1293–A1925.

This sequence belongs to the plexin family. Interacts with NRP1 and SEMA4A. Interacts with SH3BP1; they dissociate upon SEMA3E binding to PLXND1 allowing SH3BP1 to transduce downstream signal through RAC1 inactivation. Detected in embryonic heart and vascular endothelium, brain, dorsal root ganglia, adrenal gland, lung mesenchyme, small intestine and in the ossification centers of vertebral bodies.

It localises to the cell membrane. It is found in the cell projection. Its subcellular location is the lamellipodium membrane. In terms of biological role, cell surface receptor for SEMA4A and for class 3 semaphorins, such as SEMA3A, SEMA3C and SEMA3E. Plays an important role in cell-cell signaling, and in regulating the migration of a wide spectrum of cell types. Regulates the migration of thymocytes in the medulla. Regulates endothelial cell migration. Plays an important role in ensuring the specificity of synapse formation. Mediates anti-angiogenic signaling in response to SEMA3E. Required for normal development of the heart and vasculature. This Mus musculus (Mouse) protein is Plexin-D1 (Plxnd1).